The following is a 415-amino-acid chain: Fructose-like permease IIC component (415 aa).

The Cytoplasmic segment spans residues M1–M46. A PTS EIIC type-2 domain is found at L35–L410. A helical transmembrane segment spans residues V47–W67. Residues L68–S101 lie on the Periplasmic side of the membrane. A helical membrane pass occupies residues F102–I122. Over G123–L126 the chain is Cytoplasmic. A helical transmembrane segment spans residues A127–F147. At D148 to S157 the chain is on the periplasmic side. Residues S158–V178 traverse the membrane as a helical segment. Residues K179–T197 are Cytoplasmic-facing. A helical membrane pass occupies residues F198 to P218. Topologically, residues F219 to K237 are periplasmic. A helical membrane pass occupies residues G238–I258. At N259–P276 the chain is on the cytoplasmic side. A helical transmembrane segment spans residues V277–I297. The Periplasmic portion of the chain corresponds to D298 to A318. A helical transmembrane segment spans residues M319–I339. At T340 to A341 the chain is on the cytoplasmic side. Residues I342–V362 traverse the membrane as a helical segment. Topologically, residues Q363–N378 are periplasmic. The chain crosses the membrane as a helical span at residues L379–F399. Residues L400–L415 are Cytoplasmic-facing.

It localises to the cell inner membrane. Functionally, the phosphoenolpyruvate-dependent sugar phosphotransferase system (PTS), a major carbohydrate active -transport system, catalyzes the phosphorylation of incoming sugar substrates concomitant with their translocation across the cell membrane. In Escherichia coli O157:H7, this protein is Fructose-like permease IIC component (fryC).